Consider the following 853-residue polypeptide: DNA mismatch repair protein MutS (853 aa).

614-621 (GPNMGGKS) contributes to the ATP binding site.

It belongs to the DNA mismatch repair MutS family.

This protein is involved in the repair of mismatches in DNA. It is possible that it carries out the mismatch recognition step. This protein has a weak ATPase activity. This is DNA mismatch repair protein MutS from Shigella dysenteriae serotype 1 (strain Sd197).